The chain runs to 312 residues: Putative S-adenosyl-L-methionine-dependent methyltransferase Mjls_0078 (312 aa).

S-adenosyl-L-methionine-binding positions include D134 and 163 to 164; that span reads DL.

It belongs to the UPF0677 family.

Its function is as follows. Exhibits S-adenosyl-L-methionine-dependent methyltransferase activity. The chain is Putative S-adenosyl-L-methionine-dependent methyltransferase Mjls_0078 from Mycobacterium sp. (strain JLS).